The following is a 293-amino-acid chain: Formamidopyrimidine-DNA glycosylase (293 aa).

Pro-2 acts as the Schiff-base intermediate with DNA in catalysis. The active-site Proton donor is the Glu-3. The Proton donor; for beta-elimination activity role is filled by Lys-60. 3 residues coordinate DNA: His-110, Arg-129, and Arg-174. Residues 259–293 form an FPG-type zinc finger; the sequence is NVYRRTGKECRKCGNLIEKQKIAGRSTHWCPNCQK. The active-site Proton donor; for delta-elimination activity is Arg-283.

The protein belongs to the FPG family. Monomer. Zn(2+) is required as a cofactor.

It catalyses the reaction Hydrolysis of DNA containing ring-opened 7-methylguanine residues, releasing 2,6-diamino-4-hydroxy-5-(N-methyl)formamidopyrimidine.. The catalysed reaction is 2'-deoxyribonucleotide-(2'-deoxyribose 5'-phosphate)-2'-deoxyribonucleotide-DNA = a 3'-end 2'-deoxyribonucleotide-(2,3-dehydro-2,3-deoxyribose 5'-phosphate)-DNA + a 5'-end 5'-phospho-2'-deoxyribonucleoside-DNA + H(+). Functionally, involved in base excision repair of DNA damaged by oxidation or by mutagenic agents. Acts as a DNA glycosylase that recognizes and removes damaged bases. Has a preference for oxidized purines, such as 7,8-dihydro-8-oxoguanine (8-oxoG). Has AP (apurinic/apyrimidinic) lyase activity and introduces nicks in the DNA strand. Cleaves the DNA backbone by beta-delta elimination to generate a single-strand break at the site of the removed base with both 3'- and 5'-phosphates. The chain is Formamidopyrimidine-DNA glycosylase from Prochlorococcus marinus (strain MIT 9312).